Here is a 284-residue protein sequence, read N- to C-terminus: Anaerobic dimethyl sulfoxide reductase chain YnfH (284 aa).

Over Met-1–Pro-9 the chain is Periplasmic. Residues Leu-10–Gly-30 form a helical membrane-spanning segment. Residues Trp-31–Arg-45 are Cytoplasmic-facing. A helical transmembrane segment spans residues Gly-46 to Gly-66. Residues Ser-67–Glu-86 are Periplasmic-facing. Residues Ile-87–Gly-107 traverse the membrane as a helical segment. The Cytoplasmic portion of the chain corresponds to Lys-108–Lys-115. A helical membrane pass occupies residues Leu-116–Tyr-136. Residues Gln-137–Tyr-148 lie on the Periplasmic side of the membrane. A helical transmembrane segment spans residues Thr-149–Leu-169. Residues Arg-170–Pro-180 lie on the Cytoplasmic side of the membrane. The helical transmembrane segment at Phe-181–Leu-201 threads the bilayer. Over Ser-202–Ser-222 the chain is Periplasmic. Residues Leu-223–Ile-243 traverse the membrane as a helical segment. The Cytoplasmic portion of the chain corresponds to Arg-244–Val-250. The helical transmembrane segment at Ala-251–Phe-271 threads the bilayer. At Tyr-272–Gly-284 the chain is on the periplasmic side.

It belongs to the DmsC family. In terms of assembly, the complex consists of three subunits: YnfF, the reductase; YnfG, an electron transfer protein, and YnfH, a membrane anchor protein.

The protein resides in the cell inner membrane. In terms of biological role, terminal reductase during anaerobic growth on various sulfoxide and N-oxide compounds. The C subunit anchors the other two subunits to the membrane and stabilize the catalytic subunits. The polypeptide is Anaerobic dimethyl sulfoxide reductase chain YnfH (ynfH) (Escherichia coli (strain K12)).